The primary structure comprises 257 residues: Acetylglutamate kinase (257 aa).

Substrate-binding positions include Gly-43–Gly-44, Arg-65, and Asn-157. Residues Asp-180–Leu-185 and Ile-208–Thr-210 each bind ATP.

Belongs to the acetylglutamate kinase family. ArgB subfamily. As to quaternary structure, homodimer.

It localises to the cytoplasm. It catalyses the reaction N-acetyl-L-glutamate + ATP = N-acetyl-L-glutamyl 5-phosphate + ADP. It participates in amino-acid biosynthesis; L-arginine biosynthesis; N(2)-acetyl-L-ornithine from L-glutamate: step 2/4. In terms of biological role, catalyzes the ATP-dependent phosphorylation of N-acetyl-L-glutamate. The polypeptide is Acetylglutamate kinase (Serratia proteamaculans (strain 568)).